A 415-amino-acid chain; its full sequence is Gamma-glutamyl phosphate reductase (415 aa).

Belongs to the gamma-glutamyl phosphate reductase family.

It localises to the cytoplasm. It catalyses the reaction L-glutamate 5-semialdehyde + phosphate + NADP(+) = L-glutamyl 5-phosphate + NADPH + H(+). The protein operates within amino-acid biosynthesis; L-proline biosynthesis; L-glutamate 5-semialdehyde from L-glutamate: step 2/2. In terms of biological role, catalyzes the NADPH-dependent reduction of L-glutamate 5-phosphate into L-glutamate 5-semialdehyde and phosphate. The product spontaneously undergoes cyclization to form 1-pyrroline-5-carboxylate. This chain is Gamma-glutamyl phosphate reductase, found in Bacillus mycoides (strain KBAB4) (Bacillus weihenstephanensis).